A 225-amino-acid polypeptide reads, in one-letter code: Large ribosomal subunit protein eL15 (225 aa).

The disordered stretch occupies residues 159–180; that stretch reads RPFRGLTSAGKKMRGLRKSRGL. The span at 169-180 shows a compositional bias: basic residues; the sequence is KKMRGLRKSRGL.

The protein belongs to the eukaryotic ribosomal protein eL15 family.

This chain is Large ribosomal subunit protein eL15 (rpl15e), found in Aeropyrum pernix (strain ATCC 700893 / DSM 11879 / JCM 9820 / NBRC 100138 / K1).